Here is a 336-residue protein sequence, read N- to C-terminus: MKSLGEFIIEKQAEYPQAKGSLSGILSAVRRAAKIINRDINRAGVVSDLVLGSMGRENVQGETQMKLDVFAHEAMKAAFYSRDDIAGFASEEEEEFTAFDTERGHNAKYIILMDPLDGSSNIDVNVSVGSIFSIYHRVTPIGTPVTLEDFLQPGHKQIAAGYIIYGSSTMLVFTTGNGVNGFTYDPSLGTFLLSHENIKIPKDGAIYSINEGGYLKFPQGIKKYIKYCQEDAPEEHRPYKSRYIGSLVADFHRNMLKGGVYMYPQASNYPNGKLRLSYECNPMAFIAEQAGGVATTGHERILDIQPQALHQRTPFIVGSEHMVNKIKDFIAQYPDN.

Residues Glu91, Asp114, Leu116, and Asp117 each contribute to the Mg(2+) site. Residues 117-120 (DGSS), Asn210, Tyr243, and Lys273 each bind substrate. Glu279 is a binding site for Mg(2+).

The protein belongs to the FBPase class 1 family. Homotetramer. It depends on Mg(2+) as a cofactor.

It is found in the cytoplasm. The catalysed reaction is beta-D-fructose 1,6-bisphosphate + H2O = beta-D-fructose 6-phosphate + phosphate. It participates in carbohydrate biosynthesis; gluconeogenesis. This chain is Fructose-1,6-bisphosphatase class 1, found in Dichelobacter nodosus (strain VCS1703A).